A 260-amino-acid polypeptide reads, in one-letter code: Lysine/arginine/ornithine-binding periplasmic protein (260 aa).

Positions methionine 1–alanine 22 are cleaved as a signal peptide. Aspartate 33 contributes to the L-arginine binding site. Aspartate 33 is a binding site for L-lysine. An L-ornithine-binding site is contributed by aspartate 33. Cysteines 60 and 67 form a disulfide. L-arginine is bound by residues serine 91, serine 92, serine 94, arginine 99, threonine 143, and aspartate 183. Serine 91, serine 92, serine 94, arginine 99, threonine 143, and aspartate 183 together coordinate L-ornithine. 4 residues coordinate L-lysine: serine 92, serine 94, arginine 99, and threonine 143.

It belongs to the bacterial solute-binding protein 3 family. The complex is composed of two ATP-binding proteins (HisP), two transmembrane proteins (HisM and HisQ) and a solute-binding protein (ArgT).

The protein resides in the periplasm. In terms of biological role, part of the ABC transporter complex HisPMQ-ArgT involved in lysine/arginine/ornithine transport. Binds lysine, arginine and ornithine. Stimulates ATPase activity of HisP. The polypeptide is Lysine/arginine/ornithine-binding periplasmic protein (argT) (Escherichia coli (strain K12)).